Here is a 407-residue protein sequence, read N- to C-terminus: Imidazolonepropionase (407 aa).

Residues histidine 74 and histidine 76 each coordinate Fe(3+). Zn(2+) is bound by residues histidine 74 and histidine 76. 4-imidazolone-5-propanoate-binding residues include arginine 83, tyrosine 146, and histidine 179. Tyrosine 146 lines the N-formimidoyl-L-glutamate pocket. Histidine 244 contacts Fe(3+). Histidine 244 is a Zn(2+) binding site. Residue glutamine 247 coordinates 4-imidazolone-5-propanoate. Aspartate 319 contributes to the Fe(3+) binding site. Position 319 (aspartate 319) interacts with Zn(2+). Residues asparagine 321 and glycine 323 each contribute to the N-formimidoyl-L-glutamate site. Threonine 324 contacts 4-imidazolone-5-propanoate.

This sequence belongs to the metallo-dependent hydrolases superfamily. HutI family. Requires Zn(2+) as cofactor. The cofactor is Fe(3+).

It localises to the cytoplasm. It catalyses the reaction 4-imidazolone-5-propanoate + H2O = N-formimidoyl-L-glutamate. The protein operates within amino-acid degradation; L-histidine degradation into L-glutamate; N-formimidoyl-L-glutamate from L-histidine: step 3/3. Its function is as follows. Catalyzes the hydrolytic cleavage of the carbon-nitrogen bond in imidazolone-5-propanoate to yield N-formimidoyl-L-glutamate. It is the third step in the universal histidine degradation pathway. The polypeptide is Imidazolonepropionase (Salmonella enteritidis PT4 (strain P125109)).